The following is a 374-amino-acid chain: Low-specificity L-threonine aldolase (374 aa).

Lys213 carries the N6-(pyridoxal phosphate)lysine modification. Residues 354-374 form a disordered region; the sequence is HPHKDDGRNNKKMYSLDAIKK.

This sequence belongs to the threonine aldolase family. In terms of assembly, homotetramer. Pyridoxal 5'-phosphate is required as a cofactor.

It catalyses the reaction L-threonine = acetaldehyde + glycine. It carries out the reaction L-allo-threonine = acetaldehyde + glycine. It functions in the pathway amino-acid degradation; L-threonine degradation via aldolase pathway; acetaldehyde and glycine from L-threonine: step 1/1. The chain is Low-specificity L-threonine aldolase (GLY1) from Candida albicans (Yeast).